The sequence spans 329 residues: DNA repair protein RAD51 homolog 4 (329 aa).

The preferentially binds ssDNA stretch occupies residues 1–83; it reads MGMLRAGLCP…ELKTSTAILS (83 aa). An interaction with XRCC2 region spans residues 4–77; sequence LRAGLCPGLT…GADLYEELKT (74 aa). Residues 77–328 are interaction with RAD51C; sequence TSTAILSTGI…EQSPELPGKQ (252 aa). 107 to 114 provides a ligand contact to ATP; the sequence is GGPGSGKT.

The protein belongs to the RecA family. RAD51 subfamily. As to quaternary structure, part of the BCDX2 complex consisting of RAD51B, RAD51C, RAD51D and XRCC2; the complex has a ring-like structure arranged into a flat disc around a central channel. In the absence of DNA, the BCDX2 subcomplex XRCC2:RAD51D formed a multimeric ring structure; in the presence of single-stranded DNA it formed a filamentous structure with the ssDNA. Interacts with SWSAP1 and ZSWIM7; involved in homologous recombination repair. Interacts with BLM; required for stimulation of BLM activity by the BCDX2 subcomplex XRCC2:RAD51D. As to expression, highly expressed in brain followed by testis. Also expressed in heart, liver, kidney, spleen, lung and skeletal muscle.

Its subcellular location is the nucleus. The protein resides in the chromosome. It localises to the telomere. Functionally, involved in the homologous recombination repair (HRR) pathway of double-stranded DNA breaks arising during DNA replication or induced by DNA-damaging agents. Bind to single-stranded DNA (ssDNA) and has DNA-dependent ATPase activity. Part of the RAD51 paralog protein complex BCDX2 which acts in the BRCA1-BRCA2-dependent HR pathway. Upon DNA damage, BCDX2 acts downstream of BRCA2 recruitment and upstream of RAD51 recruitment. BCDX2 binds predominantly to the intersection of the four duplex arms of the Holliday junction and to junction of replication forks. The BCDX2 complex was originally reported to bind single-stranded DNA, single-stranded gaps in duplex DNA and specifically to nicks in duplex DNA. Involved in telomere maintenance. The BCDX2 subcomplex XRCC2:RAD51D can stimulate Holliday junction resolution by BLM. The sequence is that of DNA repair protein RAD51 homolog 4 (Rad51d) from Mus musculus (Mouse).